Here is a 359-residue protein sequence, read N- to C-terminus: 5-amino-6-(D-ribitylamino)uracil--L-tyrosine 4-hydroxyphenyl transferase 1 (359 aa).

A Radical SAM core domain is found at 45–282 (VTYVVNANIN…VYAISRIFFK (238 aa)). [4Fe-4S] cluster is bound by residues cysteine 59, cysteine 63, and cysteine 66.

It belongs to the radical SAM superfamily. CofH family. Consists of two subunits, CofG and CofH. [4Fe-4S] cluster serves as cofactor.

It catalyses the reaction 5-amino-6-(D-ribitylamino)uracil + L-tyrosine + S-adenosyl-L-methionine = 5-amino-5-(4-hydroxybenzyl)-6-(D-ribitylimino)-5,6-dihydrouracil + 2-iminoacetate + 5'-deoxyadenosine + L-methionine + H(+). Its pathway is cofactor biosynthesis; coenzyme F0 biosynthesis. Catalyzes the radical-mediated synthesis of 5-amino-5-(4-hydroxybenzyl)-6-(D-ribitylimino)-5,6-dihydrouracil from 5-amino-6-(D-ribitylamino)uracil and L-tyrosine. This Methanococcus maripaludis (strain DSM 14266 / JCM 13030 / NBRC 101832 / S2 / LL) protein is 5-amino-6-(D-ribitylamino)uracil--L-tyrosine 4-hydroxyphenyl transferase 1.